The following is a 122-amino-acid chain: Large ribosomal subunit protein uL14 (122 aa).

It belongs to the universal ribosomal protein uL14 family. Part of the 50S ribosomal subunit. Forms a cluster with proteins L3 and L19. In the 70S ribosome, L14 and L19 interact and together make contacts with the 16S rRNA in bridges B5 and B8.

In terms of biological role, binds to 23S rRNA. Forms part of two intersubunit bridges in the 70S ribosome. The protein is Large ribosomal subunit protein uL14 of Sulfurihydrogenibium sp. (strain YO3AOP1).